A 699-amino-acid polypeptide reads, in one-letter code: eEF1A lysine and N-terminal methyltransferase (699 aa).

Residue Met-1 is modified to N-acetylmethionine. Ser-267 carries the post-translational modification Phosphoserine. Positions 433 to 459 (VSHKAQKKRKKDRKKQRPADAEDLPAA) are disordered. The span at 436–448 (KAQKKRKKDRKKQ) shows a compositional bias: basic residues.

Belongs to the methyltransferase superfamily. In terms of assembly, forms a tripartite complex containing GAB1, METTL13 and SPRY2. Within the complex interacts with GAB1 and SPRY2.

It is found in the cytoplasm. The protein localises to the nucleus. The protein resides in the mitochondrion. The enzyme catalyses L-lysyl-[protein] + S-adenosyl-L-methionine = N(6)-methyl-L-lysyl-[protein] + S-adenosyl-L-homocysteine + H(+). The catalysed reaction is N(6)-methyl-L-lysyl-[protein] + S-adenosyl-L-methionine = N(6),N(6)-dimethyl-L-lysyl-[protein] + S-adenosyl-L-homocysteine + H(+). It catalyses the reaction N-terminal glycyl-L-lysyl-L-glutamyl-[protein] + 3 S-adenosyl-L-methionine = N-terminal N,N,N-trimethyl-glycyl-L-lysyl-L-glutamyl-[protein] + 3 S-adenosyl-L-homocysteine + 3 H(+). Protein N-terminal methyltransferase activity is inhibited by GTP and GDP. Dual methyltransferase that catalyzes methylation of elongation factor 1-alpha (EEF1A1 and EEF1A2) at two different positions, and is therefore involved in the regulation of mRNA translation. Via its C-terminus, methylates EEF1A1 and EEF1A2 at the N-terminal residue 'Gly-2'. Via its N-terminus dimethylates EEF1A1 and EEF1A2 at residue 'Lys-55'. Has no activity towards core histones H2A, H2B, H3 and H4. The sequence is that of eEF1A lysine and N-terminal methyltransferase from Homo sapiens (Human).